The following is a 393-amino-acid chain: CCA-adding enzyme (393 aa).

ATP-binding residues include Gly-27 and Arg-30. The CTP site is built by Gly-27 and Arg-30. Mg(2+) is bound by residues Asp-40 and Asp-42. Arg-111, Asp-154, Arg-157, Arg-160, and Arg-163 together coordinate ATP. Residues Arg-111, Asp-154, Arg-157, Arg-160, and Arg-163 each contribute to the CTP site.

The protein belongs to the tRNA nucleotidyltransferase/poly(A) polymerase family. Bacterial CCA-adding enzyme type 3 subfamily. In terms of assembly, homodimer. It depends on Mg(2+) as a cofactor.

The catalysed reaction is a tRNA precursor + 2 CTP + ATP = a tRNA with a 3' CCA end + 3 diphosphate. The enzyme catalyses a tRNA with a 3' CCA end + 2 CTP + ATP = a tRNA with a 3' CCACCA end + 3 diphosphate. Functionally, catalyzes the addition and repair of the essential 3'-terminal CCA sequence in tRNAs without using a nucleic acid template. Adds these three nucleotides in the order of C, C, and A to the tRNA nucleotide-73, using CTP and ATP as substrates and producing inorganic pyrophosphate. tRNA 3'-terminal CCA addition is required both for tRNA processing and repair. Also involved in tRNA surveillance by mediating tandem CCA addition to generate a CCACCA at the 3' terminus of unstable tRNAs. While stable tRNAs receive only 3'-terminal CCA, unstable tRNAs are marked with CCACCA and rapidly degraded. This Listeria monocytogenes serotype 4b (strain CLIP80459) protein is CCA-adding enzyme.